Reading from the N-terminus, the 1253-residue chain is Cytoplasmic FMR1-interacting protein 2 (1253 aa).

Residue K1037 is modified to N6-acetyllysine.

The protein belongs to the CYFIP family. As to quaternary structure, component of the WAVE1 complex composed of ABI2, CYFIP2, BRK1, NCKAP1 and WASF1/WAVE1. Interacts with RAC1 (activated form) which causes the complex to dissociate, releasing activated WASF1. The complex can also be activated by NCK1. Interacts with SHANK3; the interaction mediates the association of SHANK3 with the WAVE1 complex. Interacts with FMR1; the interaction occurs in a RNA-dependent manner. Interacts with FXR1 and FXR2. Interacts with TMEM108 (via N-terminus); the interaction associates TMEM108 with the WAVE1 complex.

Its subcellular location is the cytoplasm. It is found in the nucleus. It localises to the perinuclear region. The protein resides in the synapse. The protein localises to the synaptosome. Functionally, involved in T-cell adhesion and p53-dependent induction of apoptosis. Does not bind RNA. As component of the WAVE1 complex, required for BDNF-NTRK2 endocytic trafficking and signaling from early endosomes. The chain is Cytoplasmic FMR1-interacting protein 2 from Pongo abelii (Sumatran orangutan).